The following is a 151-amino-acid chain: Neuroglobin (151 aa).

One can recognise a Globin domain in the interval 1–149 (MERPESELIR…VVQAMSRGWD (149 aa)). His64 and His96 together coordinate heme b.

It belongs to the globin family. Monomer. Homodimer and homotetramer; disulfide-linked. Mainly monomeric but also detected as part of homodimers and homotetramers. Interacts with 14-3-3 proteins; regulates the phosphorylation of NGB. Could interact (ferrous form) with G-alpha(i) proteins (GTP-bound form). In terms of processing, phosphorylated during hypoxia by ERK1/ERK2. Phosphorylation regulates the heme pocket hexacoordination preventing the association of His-64 with the heme metal center. Thereby, promotes the access of dioxygen and nitrite to the heme and stimulates the nitrite reductase activity. Phosphorylation during hypoxia is stabilized by 14-3-3 proteins. Widely distributed throughout the adult brain, including cerebral cortex, hippocampus, thalamus, hypothalamus, olfactory bulb, and cerebellum.

The protein localises to the cytoplasm. It is found in the cytosol. The protein resides in the mitochondrion matrix. It carries out the reaction Fe(III)-heme b-[protein] + nitric oxide + H2O = Fe(II)-heme b-[protein] + nitrite + 2 H(+). Its function is as follows. Monomeric globin with a bis-histidyl six-coordinate heme-iron atom through which it can bind dioxygen, carbon monoxide and nitric oxide. Could help transport oxygen and increase its availability to the metabolically active neuronal tissues, though its low quantity in tissues as well as its high affinity for dioxygen, which may limit its oxygen-releasing ability, argue against it. The ferrous/deoxygenated form exhibits a nitrite reductase activity and it could produce nitric oxide which in turn inhibits cellular respiration in response to hypoxia. In its ferrous/deoxygenated state, it may also exhibit GDI (Guanine nucleotide Dissociation Inhibitor) activity toward heterotrimeric G-alpha proteins, thereby regulating signal transduction to facilitate neuroprotective responses in the wake of hypoxia and associated oxidative stress. This chain is Neuroglobin, found in Rattus norvegicus (Rat).